The chain runs to 221 residues: Large ribosomal subunit protein uL4 (221 aa).

A disordered region spans residues 48–77 (TASTKTRGEVSGGGRKPWIQKHTGRARQGS).

This sequence belongs to the universal ribosomal protein uL4 family. In terms of assembly, part of the 50S ribosomal subunit.

In terms of biological role, one of the primary rRNA binding proteins, this protein initially binds near the 5'-end of the 23S rRNA. It is important during the early stages of 50S assembly. It makes multiple contacts with different domains of the 23S rRNA in the assembled 50S subunit and ribosome. Its function is as follows. Forms part of the polypeptide exit tunnel. This Thermosipho africanus (strain TCF52B) protein is Large ribosomal subunit protein uL4.